A 285-amino-acid polypeptide reads, in one-letter code: Bifunctional protein FolD (285 aa).

NADP(+) is bound by residues 165 to 167 (GRS) and Ser-190.

This sequence belongs to the tetrahydrofolate dehydrogenase/cyclohydrolase family. Homodimer.

It catalyses the reaction (6R)-5,10-methylene-5,6,7,8-tetrahydrofolate + NADP(+) = (6R)-5,10-methenyltetrahydrofolate + NADPH. The enzyme catalyses (6R)-5,10-methenyltetrahydrofolate + H2O = (6R)-10-formyltetrahydrofolate + H(+). It functions in the pathway one-carbon metabolism; tetrahydrofolate interconversion. Catalyzes the oxidation of 5,10-methylenetetrahydrofolate to 5,10-methenyltetrahydrofolate and then the hydrolysis of 5,10-methenyltetrahydrofolate to 10-formyltetrahydrofolate. The chain is Bifunctional protein FolD from Burkholderia orbicola (strain AU 1054).